A 278-amino-acid polypeptide reads, in one-letter code: Dermonecrotic toxin LhSicTox-alphaIV1ii (278 aa).

Histidine 5 is an active-site residue. Residues glutamate 25 and aspartate 27 each contribute to the Mg(2+) site. Histidine 41 serves as the catalytic Nucleophile. 2 disulfides stabilise this stretch: cysteine 45–cysteine 51 and cysteine 47–cysteine 192. Aspartate 85 is a Mg(2+) binding site.

It belongs to the arthropod phospholipase D family. Class II subfamily. It depends on Mg(2+) as a cofactor. As to expression, expressed by the venom gland.

It is found in the secreted. The enzyme catalyses an N-(acyl)-sphingosylphosphocholine = an N-(acyl)-sphingosyl-1,3-cyclic phosphate + choline. It carries out the reaction an N-(acyl)-sphingosylphosphoethanolamine = an N-(acyl)-sphingosyl-1,3-cyclic phosphate + ethanolamine. The catalysed reaction is a 1-acyl-sn-glycero-3-phosphocholine = a 1-acyl-sn-glycero-2,3-cyclic phosphate + choline. It catalyses the reaction a 1-acyl-sn-glycero-3-phosphoethanolamine = a 1-acyl-sn-glycero-2,3-cyclic phosphate + ethanolamine. Functionally, dermonecrotic toxins cleave the phosphodiester linkage between the phosphate and headgroup of certain phospholipids (sphingolipid and lysolipid substrates), forming an alcohol (often choline) and a cyclic phosphate. This toxin acts on sphingomyelin (SM). It may also act on ceramide phosphoethanolamine (CPE), lysophosphatidylcholine (LPC) and lysophosphatidylethanolamine (LPE), but not on lysophosphatidylserine (LPS), and lysophosphatidylglycerol (LPG). It acts by transphosphatidylation, releasing exclusively cyclic phosphate products as second products. Induces dermonecrosis, hemolysis, increased vascular permeability, edema, inflammatory response, and platelet aggregation. The polypeptide is Dermonecrotic toxin LhSicTox-alphaIV1ii (Loxosceles hirsuta (Recluse spider)).